We begin with the raw amino-acid sequence, 818 residues long: Probable helicase MAGATAMA 3 (818 aa).

Residues 259–559 enclose the UvrD-like helicase ATP-binding domain; it reads NKSQKEAIDV…KMLKTQYRMH (301 aa). 280-287 is an ATP binding site; sequence GPPGTGKT. Acidic residues-rich tracts occupy residues 781–790 and 798–818; these read PDAPLYEDES and GDDDFGDGDADQDDVAMAGED. Residues 781–818 are disordered; that stretch reads PDAPLYEDESLPVAPYGGDDDFGDGDADQDDVAMAGED.

This sequence belongs to the helicase family. As to expression, expressed in flowers, siliques, leaves, roots and shoot apex.

It is found in the nucleus. Its function is as follows. Probable helicase that may regulate RNA molecules involved in nucleolar organization and pollen tube guidance. This is Probable helicase MAGATAMA 3 (MAA3) from Arabidopsis thaliana (Mouse-ear cress).